The primary structure comprises 123 residues: Large ribosomal subunit protein bL12 (123 aa).

Belongs to the bacterial ribosomal protein bL12 family. Homodimer. Part of the ribosomal stalk of the 50S ribosomal subunit. Forms a multimeric L10(L12)X complex, where L10 forms an elongated spine to which 2 to 4 L12 dimers bind in a sequential fashion. Binds GTP-bound translation factors.

Forms part of the ribosomal stalk which helps the ribosome interact with GTP-bound translation factors. Is thus essential for accurate translation. The sequence is that of Large ribosomal subunit protein bL12 from Acinetobacter baumannii (strain AB307-0294).